An 89-amino-acid polypeptide reads, in one-letter code: uncharacterized protein (89 aa).

To M.tuberculosis Rv3402c.

This is an uncharacterized protein from Mycobacterium tuberculosis (strain CDC 1551 / Oshkosh).